We begin with the raw amino-acid sequence, 267 residues long: Phosphate import ATP-binding protein PstB (267 aa).

Residues 21–262 (VAARNLDFYY…PSKQQTEDYI (242 aa)) form the ABC transporter domain. An ATP-binding site is contributed by 53–60 (GPSGCGKS).

Belongs to the ABC transporter superfamily. Phosphate importer (TC 3.A.1.7) family. As to quaternary structure, the complex is composed of two ATP-binding proteins (PstB), two transmembrane proteins (PstC and PstA) and a solute-binding protein (PstS).

The protein localises to the cell inner membrane. It carries out the reaction phosphate(out) + ATP + H2O = ADP + 2 phosphate(in) + H(+). Functionally, part of the ABC transporter complex PstSACB involved in phosphate import. Responsible for energy coupling to the transport system. The protein is Phosphate import ATP-binding protein PstB of Xanthomonas oryzae pv. oryzae (strain MAFF 311018).